The following is a 339-amino-acid chain: Glyceraldehyde-3-phosphate dehydrogenase (339 aa).

Residues Arg12–Ile13, Asp34, and Lys79 each bind NAD(+). D-glyceraldehyde 3-phosphate contacts are provided by residues Ser150–Thr152, Thr181, Thr210–Gly211, and Arg233. Cys151 (nucleophile) is an active-site residue. Asn316 is a binding site for NAD(+).

Belongs to the glyceraldehyde-3-phosphate dehydrogenase family. Homotetramer.

Its subcellular location is the cytoplasm. The catalysed reaction is D-glyceraldehyde 3-phosphate + phosphate + NAD(+) = (2R)-3-phospho-glyceroyl phosphate + NADH + H(+). The protein operates within carbohydrate degradation; glycolysis; pyruvate from D-glyceraldehyde 3-phosphate: step 1/5. The sequence is that of Glyceraldehyde-3-phosphate dehydrogenase (GPD) from Cryptococcus neoformans var. neoformans serotype D (strain B-3501A) (Filobasidiella neoformans).